Consider the following 291-residue polypeptide: uncharacterized protein (291 aa).

Positions 1 to 58 (MDLKWLQTFIAAAESESFREAAEHLYLTQPAVSQHMRKLEDELDMRLFLHSGRRVVLT) constitute an HTH lysR-type domain. Positions 18–37 (FREAAEHLYLTQPAVSQHMR) form a DNA-binding region, H-T-H motif.

This sequence belongs to the LysR transcriptional regulatory family.

This is an uncharacterized protein from Bacillus subtilis (strain 168).